The following is a 122-amino-acid chain: Large ribosomal subunit protein uL14 (122 aa).

This sequence belongs to the universal ribosomal protein uL14 family. Part of the 50S ribosomal subunit. Forms a cluster with proteins L3 and L19. In the 70S ribosome, L14 and L19 interact and together make contacts with the 16S rRNA in bridges B5 and B8.

In terms of biological role, binds to 23S rRNA. Forms part of two intersubunit bridges in the 70S ribosome. This is Large ribosomal subunit protein uL14 from Thermotoga maritima (strain ATCC 43589 / DSM 3109 / JCM 10099 / NBRC 100826 / MSB8).